We begin with the raw amino-acid sequence, 467 residues long: Glycogen synthase (467 aa).

ADP-alpha-D-glucose is bound at residue K15.

It belongs to the glycosyltransferase 1 family. Bacterial/plant glycogen synthase subfamily.

The enzyme catalyses [(1-&gt;4)-alpha-D-glucosyl](n) + ADP-alpha-D-glucose = [(1-&gt;4)-alpha-D-glucosyl](n+1) + ADP + H(+). It functions in the pathway glycan biosynthesis; glycogen biosynthesis. Functionally, synthesizes alpha-1,4-glucan chains using ADP-glucose. In Desulfitobacterium hafniense (strain DSM 10664 / DCB-2), this protein is Glycogen synthase.